Consider the following 69-residue polypeptide: Small ribosomal subunit protein bS21 (69 aa).

Positions 50 to 69 (KAFKRKQAKKVRKLKQKTNR) are disordered.

This sequence belongs to the bacterial ribosomal protein bS21 family.

The polypeptide is Small ribosomal subunit protein bS21 (Borrelia garinii subsp. bavariensis (strain ATCC BAA-2496 / DSM 23469 / PBi) (Borreliella bavariensis)).